A 31-amino-acid polypeptide reads, in one-letter code: Cytochrome b6-f complex subunit 6 (31 aa).

The helical transmembrane segment at 4-26 (ITSYFGFLLAASTITPALLIGLS) threads the bilayer.

The protein belongs to the PetL family. The 4 large subunits of the cytochrome b6-f complex are cytochrome b6, subunit IV (17 kDa polypeptide, PetD), cytochrome f and the Rieske protein, while the 4 small subunits are PetG, PetL, PetM and PetN. The complex functions as a dimer.

The protein localises to the plastid. Its subcellular location is the chloroplast thylakoid membrane. Component of the cytochrome b6-f complex, which mediates electron transfer between photosystem II (PSII) and photosystem I (PSI), cyclic electron flow around PSI, and state transitions. PetL is important for photoautotrophic growth as well as for electron transfer efficiency and stability of the cytochrome b6-f complex. This Illicium oligandrum (Star anise) protein is Cytochrome b6-f complex subunit 6.